The primary structure comprises 20 residues: MDLIPDLAVETWLLLAVTLV.

It belongs to the cytochrome P450 family. It depends on heme as a cofactor.

Its subcellular location is the endoplasmic reticulum membrane. The protein localises to the microsome membrane. The enzyme catalyses an organic molecule + reduced [NADPH--hemoprotein reductase] + O2 = an alcohol + oxidized [NADPH--hemoprotein reductase] + H2O + H(+). 6-beta-testosterone hydroxylase. The sequence is that of Cytochrome P450 3A5 from Papio sp. (Baboon).